The primary structure comprises 515 residues: Cytochrome P450 2D7 (515 aa).

The Extracellular segment spans residues 1–2 (MG). A helical membrane pass occupies residues 3–23 (LEALVPLAMIVAIFLLLVDLM). The Cytoplasmic portion of the chain corresponds to 24 to 301 (HRHQRWAARY…DENLRIVVGN (278 aa)). A helical membrane pass occupies residues 302-322 (LFLAGMVTTSTTLAWGLLLMI). Over 323 to 515 (LHLDVQRGRR…SPYELCAVPR (193 aa)) the chain is Extracellular. Asparagine 416 carries an N-linked (GlcNAc...) asparagine glycan. Residue cysteine 461 participates in heme binding.

This sequence belongs to the cytochrome P450 family. Requires heme as cofactor. In terms of tissue distribution, expressed in brain cortex (at protein level).

It localises to the membrane. The protein localises to the cytoplasm. Its subcellular location is the mitochondrion. It carries out the reaction an organic molecule + reduced [NADPH--hemoprotein reductase] + O2 = an alcohol + oxidized [NADPH--hemoprotein reductase] + H2O + H(+). Its function is as follows. May be responsible for the metabolism of many drugs and environmental chemicals that it oxidizes. It may be involved in the metabolism of codeine to morphine. However, another study could not confirm it. This is Cytochrome P450 2D7 from Homo sapiens (Human).